The sequence spans 366 residues: Aliphatic nitrilase (366 aa).

The CN hydrolase domain maps to 8 to 282 (FKVAAVQAQP…EGILYADIDL (275 aa)). The active-site Proton acceptor is glutamate 48. Lysine 131 acts as the Proton donor in catalysis. Catalysis depends on cysteine 165, which acts as the Nucleophile. The tract at residues 346 to 366 (DEQRALPSTHSDETDRATASI) is disordered. The segment covering 355-366 (HSDETDRATASI) has biased composition (basic and acidic residues).

The protein belongs to the carbon-nitrogen hydrolase superfamily. Nitrilase family. Homodimer.

The catalysed reaction is an aliphatic nitrile + 2 H2O = a carboxylate + NH4(+). In Rhodococcus rhodochrous, this protein is Aliphatic nitrilase (nitA).